A 178-amino-acid polypeptide reads, in one-letter code: uncharacterized protein (178 aa).

This is an uncharacterized protein from Acanthamoeba polyphaga mimivirus (APMV).